The chain runs to 355 residues: 3'-5' exonuclease (355 aa).

Residues 1 to 121 (MDKYLIKLPN…PSPEKEKPEK (121 aa)) form a disordered region. 3 stretches are compositionally biased toward basic and acidic residues: residues 17-29 (VSDK…KETP), 36-50 (AKKD…KENT), and 72-92 (KNLD…ENPP). Phosphoserine is present on residues S105 and S113. The 3'-5' exonuclease domain occupies 147–315 (VMQWVEKQKE…GQVIYRDLEQ (169 aa)). Positions 164, 166, and 302 each coordinate Mg(2+).

The protein belongs to the WRNexo family.

The protein localises to the nucleus. Functionally, has exonuclease activity on both single-stranded and duplex templates bearing overhangs, but not blunt ended duplex DNA, and cleaves in a 3'-5' direction. Essential for the formation of DNA replication focal centers. Has an important role in maintaining genome stability. This Drosophila ananassae (Fruit fly) protein is 3'-5' exonuclease.